The sequence spans 278 residues: Large ribosomal subunit protein uL2 (278 aa).

Positions 201 to 278 (HGNINDGKAG…IMRSRHQRKK (78 aa)) are disordered. Residues 210 to 221 (GRSRWRGKKPHV) are compositionally biased toward basic residues.

It belongs to the universal ribosomal protein uL2 family. In terms of assembly, part of the 50S ribosomal subunit. Forms a bridge to the 30S subunit in the 70S ribosome.

In terms of biological role, one of the primary rRNA binding proteins. Required for association of the 30S and 50S subunits to form the 70S ribosome, for tRNA binding and peptide bond formation. It has been suggested to have peptidyltransferase activity; this is somewhat controversial. Makes several contacts with the 16S rRNA in the 70S ribosome. This Rhizobium rhizogenes (strain K84 / ATCC BAA-868) (Agrobacterium radiobacter) protein is Large ribosomal subunit protein uL2.